The following is a 311-amino-acid chain: Ribosomal RNA small subunit methyltransferase H (311 aa).

S-adenosyl-L-methionine-binding positions include 33 to 35 (AGH), Asp53, Phe80, Asp101, and Gln108.

This sequence belongs to the methyltransferase superfamily. RsmH family.

Its subcellular location is the cytoplasm. The catalysed reaction is cytidine(1402) in 16S rRNA + S-adenosyl-L-methionine = N(4)-methylcytidine(1402) in 16S rRNA + S-adenosyl-L-homocysteine + H(+). In terms of biological role, specifically methylates the N4 position of cytidine in position 1402 (C1402) of 16S rRNA. The protein is Ribosomal RNA small subunit methyltransferase H of Geobacter sulfurreducens (strain ATCC 51573 / DSM 12127 / PCA).